Reading from the N-terminus, the 959-residue chain is Alanine--tRNA ligase (959 aa).

Ser389 carries the post-translational modification Phosphoserine. Residues His606, His610, Cys725, and His729 each contribute to the Zn(2+) site.

It belongs to the class-II aminoacyl-tRNA synthetase family. Monomer. The cofactor is Zn(2+).

The protein localises to the mitochondrion. Its subcellular location is the cytoplasm. The catalysed reaction is tRNA(Ala) + L-alanine + ATP = L-alanyl-tRNA(Ala) + AMP + diphosphate. Functionally, catalyzes the attachment of alanine to tRNA(Ala) in a two-step reaction: alanine is first activated by ATP to form Ala-AMP and then transferred to the acceptor end of tRNA(Ala). Also edits incorrectly charged tRNA(Ala) via its editing domain. This Schizosaccharomyces pombe (strain 972 / ATCC 24843) (Fission yeast) protein is Alanine--tRNA ligase (ala1).